The following is a 399-amino-acid chain: Enoyl-[acyl-carrier-protein] reductase [NADH] (399 aa).

NAD(+) contacts are provided by residues 48–53, 74–75, 111–112, and 139–140; these read GASTGY, FE, DA, and LA. Tyr225 lines the substrate pocket. The Proton donor role is filled by Tyr235. Residues Lys244 and 274–276 each bind NAD(+); that span reads VVT.

The protein belongs to the TER reductase family. In terms of assembly, monomer.

The enzyme catalyses a 2,3-saturated acyl-[ACP] + NAD(+) = a (2E)-enoyl-[ACP] + NADH + H(+). It functions in the pathway lipid metabolism; fatty acid biosynthesis. In terms of biological role, involved in the final reduction of the elongation cycle of fatty acid synthesis (FAS II). Catalyzes the reduction of a carbon-carbon double bond in an enoyl moiety that is covalently linked to an acyl carrier protein (ACP). This Yersinia pestis bv. Antiqua (strain Antiqua) protein is Enoyl-[acyl-carrier-protein] reductase [NADH].